Reading from the N-terminus, the 265-residue chain is Tryptophan synthase alpha chain (265 aa).

Residues Glu-48 and Asp-59 each act as proton acceptor in the active site.

The protein belongs to the TrpA family. As to quaternary structure, tetramer of two alpha and two beta chains.

It carries out the reaction (1S,2R)-1-C-(indol-3-yl)glycerol 3-phosphate + L-serine = D-glyceraldehyde 3-phosphate + L-tryptophan + H2O. Its pathway is amino-acid biosynthesis; L-tryptophan biosynthesis; L-tryptophan from chorismate: step 5/5. In terms of biological role, the alpha subunit is responsible for the aldol cleavage of indoleglycerol phosphate to indole and glyceraldehyde 3-phosphate. This chain is Tryptophan synthase alpha chain, found in Ruthia magnifica subsp. Calyptogena magnifica.